A 595-amino-acid polypeptide reads, in one-letter code: Neuroepithelial cell-transforming gene 1 protein (595 aa).

Position 1 is an N-acetylmethionine (methionine 1). The interval 1–42 (MEPEPAAQKQPRPRRRSRRVSMLSEEPAAGLPADTPGPAANE) is disordered. Positions 1–74 (MEPEPAAQKQ…LKRKRREKDD (74 aa)) are necessary for nuclear localization. The Nuclear localization signal motif lies at 12–19 (RPRRRSRR). Phosphoserine is present on serine 21. The Nuclear localization signal motif lies at 66 to 72 (KRKRREK). Phosphoserine occurs at positions 100, 106, and 122. Residues 127 to 151 (GDHRSPASAQKSFSRSTVPTPTKRR) are disordered. Positions 133–146 (ASAQKSFSRSTVPT) are enriched in polar residues. Residues 174–356 (KRQEAIYELS…QGVLSDINLK (183 aa)) enclose the DH domain. The PH domain occupies 386-501 (VLLCHGELKN…WFNCIRAAIA (116 aa)). The residue at position 508 (serine 508) is a Phosphoserine. Residues 555 to 595 (CGSSVQTVEDTRNMKAQRPQPGLRRARDKAQSGGKKKETLV) form a disordered region.

Interacts with RHOA in its GTP- and GDP-bound states, and with CDC42 in its GTP-bound state. Interacts with the PDZ 1 domain of BAIAP1.

It localises to the cytoplasm. The protein resides in the nucleus. In terms of biological role, acts as a guanine nucleotide exchange factor (GEF) for RhoA GTPase. May be involved in activation of the SAPK/JNK pathway. Stimulates genotoxic stress-induced RHOB activity in breast cancer cells leading to their cell death. The polypeptide is Neuroepithelial cell-transforming gene 1 protein (Net1) (Mus musculus (Mouse)).